Reading from the N-terminus, the 106-residue chain is Movement protein TGB2 (106 aa).

The Cytoplasmic segment spans residues 1-9 (MPLTPPPDH). Residues 10–30 (TKVLLVAAIGLSIVASILTYS) traverse the membrane as a helical segment. Topologically, residues 31–71 (RNTLPQVGDHSHLLPHGGVYKDGTKTIVYGGPRKLNSLEGG) are lumenal. The chain crosses the membrane as a helical span at residues 72–92 (FNLPVQPWFLVILLSAAIFLL). Residues 93-106 (SCRSGHRRVCGQCH) are Cytoplasmic-facing.

Belongs to the Tymovirales TGBp2 protein family.

It localises to the host endoplasmic reticulum membrane. Its function is as follows. Plays a role in viral cell-to-cell propagation, by facilitating genome transport to neighboring plant cells through plasmosdesmata,. This chain is Movement protein TGB2, found in Chrysanthemum morifolium (Florist's daisy).